We begin with the raw amino-acid sequence, 1241 residues long: ATP-dependent helicase/nuclease subunit A (1241 aa).

Positions 12-485 (SQWTDDQWKA…IDLAKNFRSR (474 aa)) constitute a UvrD-like helicase ATP-binding domain. 33–40 (AAAGSGKT) contributes to the ATP binding site. In terms of domain architecture, UvrD-like helicase C-terminal spans 505 to 805 (GEIDYDADAE…RIMTIHKSKG (301 aa)).

This sequence belongs to the helicase family. AddA subfamily. In terms of assembly, heterodimer of AddA and AddB/RexB. It depends on Mg(2+) as a cofactor.

It catalyses the reaction Couples ATP hydrolysis with the unwinding of duplex DNA by translocating in the 3'-5' direction.. The catalysed reaction is ATP + H2O = ADP + phosphate + H(+). The heterodimer acts as both an ATP-dependent DNA helicase and an ATP-dependent, dual-direction single-stranded exonuclease. Recognizes the chi site generating a DNA molecule suitable for the initiation of homologous recombination. The AddA nuclease domain is required for chi fragment generation; this subunit has the helicase and 3' -&gt; 5' nuclease activities. In Bacillus cereus (strain ZK / E33L), this protein is ATP-dependent helicase/nuclease subunit A.